A 273-amino-acid polypeptide reads, in one-letter code: uncharacterized protein (273 aa).

This is an uncharacterized protein from Acanthamoeba polyphaga (Amoeba).